A 122-amino-acid polypeptide reads, in one-letter code: Large ribosomal subunit protein uL18 (122 aa).

The interval 1–27 (MATLSKKQQTQKRHKRLRRHLNGTNHR) is disordered. A compositionally biased stretch (basic residues) spans 9–27 (QTQKRHKRLRRHLNGTNHR).

Belongs to the universal ribosomal protein uL18 family. As to quaternary structure, part of the 50S ribosomal subunit; part of the 5S rRNA/L5/L18/L25 subcomplex. Contacts the 5S and 23S rRNAs.

This is one of the proteins that bind and probably mediate the attachment of the 5S RNA into the large ribosomal subunit, where it forms part of the central protuberance. The polypeptide is Large ribosomal subunit protein uL18 (Prochlorococcus marinus (strain MIT 9211)).